We begin with the raw amino-acid sequence, 337 residues long: MRPILLSGHERSLNQIKFNRDGDLIFSVAKDKIVCAWWSANGERLGTYNGHQGAIWTVDVSPNTQILATGSADNTVRLWNVKTGECIKVWDFPTAVKRVRVHPPMEADCWPVTEKRMGFLGTIAVLDINYGENLTEQAEEPSLRITCTESKATVAGWSYMGKYIIAGHEDGSVSQYDGKTGEQLENVQAHEFDHQINDIQFSADRTYFITASKDKSAKLMSTRNLAILKTYVADTPLNSATITPKKDYVILGGGQAAMDVTTTSARQGKFEARFYHKVFEDEIGRVRGHFGPLNTVHIHPAGTAYASGGEDGYVRVHHFDKPYFDFMYEVEREQLRK.

WD repeat units follow at residues 8–47 (GHER…RLGT), 50–91 (GHQG…KVWD), 147–186 (CTES…QLEN), 191–230 (EFDH…ILKT), and 288–327 (GHFG…FDFM).

The protein belongs to the eIF-3 subunit I family. In terms of assembly, component of the eukaryotic translation initiation factor 3 (eIF-3) complex.

It is found in the cytoplasm. In terms of biological role, component of the eukaryotic translation initiation factor 3 (eIF-3) complex, which is involved in protein synthesis of a specialized repertoire of mRNAs and, together with other initiation factors, stimulates binding of mRNA and methionyl-tRNAi to the 40S ribosome. The eIF-3 complex specifically targets and initiates translation of a subset of mRNAs involved in cell proliferation. In Aspergillus niger (strain ATCC MYA-4892 / CBS 513.88 / FGSC A1513), this protein is Eukaryotic translation initiation factor 3 subunit I (tif34).